The sequence spans 532 residues: Muscarinic acetylcholine receptor M5 (532 aa).

Residues 1-29 (MEGDSYHNATTVNGTPVYHQPLERHRLWE) lie on the Extracellular side of the membrane. A glycan (N-linked (GlcNAc...) asparagine) is linked at asparagine 8. The helical transmembrane segment at 30–53 (VISIAAVTAVVSLITIVGNVLVMI) threads the bilayer. Residues 54 to 66 (SFKVNSQLKTVNN) are Cytoplasmic-facing. The helical transmembrane segment at 67–87 (YYLLSLACADLIIGIFSMNLY) threads the bilayer. At 88–104 (TTYILMGRWALGSLACD) the chain is on the extracellular side. Cysteines 103 and 183 form a disulfide. The chain crosses the membrane as a helical span at residues 105-126 (LWLALDYVASNASVMNLLVISF). At 127–146 (DRYFSITRPLTYRAKRTPKR) the chain is on the cytoplasmic side. Residues 147 to 169 (AGVMIGLAWLISFILWAPAILCW) form a helical membrane-spanning segment. At 170 to 191 (QYLVGKRTVPLDECQIQFLSEP) the chain is on the extracellular side. The chain crosses the membrane as a helical span at residues 192-214 (TITFGTAIAAFYIPVSVMTILYC). Over 215-443 (RIYRETEKRT…LVKERKAAQT (229 aa)) the chain is Cytoplasmic. The tract at residues 262–365 (AQRERNQTSW…SDTPNYFLSP (104 aa)) is disordered. Residues 269-281 (TSWSSSRRSASTS) show a composition bias toward low complexity. Over residues 282–308 (GKPSQATDPSTNQAKAEQLTTCSSYPS) the composition is skewed to polar residues. A helical membrane pass occupies residues 444–464 (LSAILLAFIITWTPYNIMVLV). Topologically, residues 465 to 478 (STFCDKCVPVTLWH) are extracellular. A helical membrane pass occupies residues 479 to 498 (LGYWLCYVNSTVNPICYALC). At 499–532 (NRTFRKTFKMLLLCRWKKKKVEEKLYWQGNSKLP) the chain is on the cytoplasmic side. Phosphothreonine is present on residues threonine 501 and threonine 505.

It belongs to the G-protein coupled receptor 1 family. Muscarinic acetylcholine receptor subfamily. CHRM5 sub-subfamily.

The protein localises to the cell membrane. It is found in the postsynaptic cell membrane. Functionally, the muscarinic acetylcholine receptor mediates various cellular responses, including inhibition of adenylate cyclase, breakdown of phosphoinositides and modulation of potassium channels through the action of G proteins. Primary transducing effect is Pi turnover. The sequence is that of Muscarinic acetylcholine receptor M5 (CHRM5) from Macaca mulatta (Rhesus macaque).